A 718-amino-acid polypeptide reads, in one-letter code: Protein Hook homolog 3 (718 aa).

An N-acetylmethionine modification is found at M1. The tract at residues 1–164 is sufficient for interaction with microtubules; that stretch reads MFSVESLERA…QELMSKESPV (164 aa). A phosphoserine mark is found at S3 and S6. A Calponin-homology (CH) domain is found at 10–126; the sequence is AELCESLLTW…RMLQLILGCA (117 aa). Coiled coils occupy residues 167–433 and 462–667; these read GNDA…VQAQ and EIRE…YIVS. Position 238 is a phosphoserine (S238). The required for association with Golgi stretch occupies residues 553–718; it reads EKLHEANNEL…PGHVQPATAR (166 aa). The interval 556–718 is required for interaction with MSR1; the sequence is HEANNELQKK…PGHVQPATAR (163 aa). Residues 682–718 are disordered; the sequence is EDRLASTGSGQSFLARQRQATSSRRSYPGHVQPATAR. Residues S693 and S707 each carry the phosphoserine modification. Low complexity predominate over residues 696–707; that stretch reads ARQRQATSSRRS.

It belongs to the hook family. As to quaternary structure, self-associates. Component of the FTS/Hook/FHIP complex (FHF complex), composed of AKTIP/FTS, FHIP1B, and one or more members of the Hook family of proteins HOOK1, HOOK2, and HOOK3. May interact directly with AKTIP/FTS, HOOK1 and HOOK2. Associates with several subunits of the homotypic vesicular sorting complex (the HOPS complex) including VPS16 and VPS41; these interactions may be indirect. Interacts with MSR1, and this association is stimulated by ligand binding to MSR1. Interacts with microtubules. Part of a tripartite complex with dynein and dynactin, acts an adapter linking the dynein motor complex and dynactin. Interacts with dynein intermediate chain and dynactin (DCTN1). Interacts with CCDC181. Interacts with LRGUK. In terms of assembly, (Microbial infection) Interacts with Salmonella typhimurium spiC.

It localises to the cytoplasm. The protein localises to the cytoskeleton. It is found in the golgi apparatus. Its function is as follows. Acts as an adapter protein linking the dynein motor complex to various cargos and converts dynein from a non-processive to a highly processive motor in the presence of dynactin. Facilitates the interaction between dynein and dynactin and activates dynein processivity (the ability to move along a microtubule for a long distance without falling off the track). Predominantly recruits 2 dyneins, which increases both the force and speed of the microtubule motor. Component of the FTS/Hook/FHIP complex (FHF complex). The FHF complex may function to promote vesicle trafficking and/or fusion via the homotypic vesicular protein sorting complex (the HOPS complex). May regulate clearance of endocytosed receptors such as MSR1. Participates in defining the architecture and localization of the Golgi complex. FHF complex promotes the distribution of AP-4 complex to the perinuclear area of the cell. Functionally, (Microbial infection) May serve as a target for the spiC protein from Salmonella typhimurium, which inactivates it, leading to a strong alteration in cellular trafficking. This Homo sapiens (Human) protein is Protein Hook homolog 3.